Reading from the N-terminus, the 154-residue chain is Lipoprotein signal peptidase (154 aa).

4 helical membrane passes run 8 to 28 (AFFL…YWAL), 36 to 56 (IVVN…AFSF), 66 to 86 (WLFA…LLTK), and 88 to 108 (HHWL…GNLY). Catalysis depends on residues Asp-118 and Asp-136. A helical transmembrane segment spans residues 129–149 (WPVFNLADVAITLGVILMLIA).

This sequence belongs to the peptidase A8 family.

Its subcellular location is the cell inner membrane. It carries out the reaction Release of signal peptides from bacterial membrane prolipoproteins. Hydrolyzes -Xaa-Yaa-Zaa-|-(S,diacylglyceryl)Cys-, in which Xaa is hydrophobic (preferably Leu), and Yaa (Ala or Ser) and Zaa (Gly or Ala) have small, neutral side chains.. It functions in the pathway protein modification; lipoprotein biosynthesis (signal peptide cleavage). In terms of biological role, this protein specifically catalyzes the removal of signal peptides from prolipoproteins. The protein is Lipoprotein signal peptidase of Dichelobacter nodosus (strain VCS1703A).